The chain runs to 202 residues: Putative NAD(P)H nitroreductase YodC (202 aa).

FMN-binding positions include 11–13 (RAS), 68–70 (QKQ), 155–156 (GG), and R192.

Belongs to the nitroreductase family. Requires FMN as cofactor.

The protein resides in the cytoplasm. In terms of biological role, putative nitroreductase that may contribute to the degradation of aromatic compounds. The sequence is that of Putative NAD(P)H nitroreductase YodC (yodC) from Bacillus subtilis (strain 168).